Reading from the N-terminus, the 328-residue chain is Biotin synthase (328 aa).

The 220-residue stretch at 41–260 (TAIETASLLS…VALARILMPA (220 aa)) folds into the Radical SAM core domain. Cysteine 56, cysteine 60, and cysteine 63 together coordinate [4Fe-4S] cluster. Residues cysteine 100, cysteine 131, cysteine 191, and arginine 264 each coordinate [2Fe-2S] cluster.

Belongs to the radical SAM superfamily. Biotin synthase family. As to quaternary structure, homodimer. [4Fe-4S] cluster is required as a cofactor. Requires [2Fe-2S] cluster as cofactor.

It carries out the reaction (4R,5S)-dethiobiotin + (sulfur carrier)-SH + 2 reduced [2Fe-2S]-[ferredoxin] + 2 S-adenosyl-L-methionine = (sulfur carrier)-H + biotin + 2 5'-deoxyadenosine + 2 L-methionine + 2 oxidized [2Fe-2S]-[ferredoxin]. The protein operates within cofactor biosynthesis; biotin biosynthesis; biotin from 7,8-diaminononanoate: step 2/2. Catalyzes the conversion of dethiobiotin (DTB) to biotin by the insertion of a sulfur atom into dethiobiotin via a radical-based mechanism. The chain is Biotin synthase from Cereibacter sphaeroides (strain ATCC 17023 / DSM 158 / JCM 6121 / CCUG 31486 / LMG 2827 / NBRC 12203 / NCIMB 8253 / ATH 2.4.1.) (Rhodobacter sphaeroides).